The primary structure comprises 398 residues: MESELKDLNSNSNPPSSKEDRPLLKSESDLAAAIEELDKKFAPYARTDLYGTMGLGPFPMTENIKLAVALVTLVPLRFLLSMSILLLYYLICRVFTLFSAPYRGPEEEEDEGGVVFQEDYAHMEGWKRTVIVRSGRFLSRVLLFVFGFYWIHESCPDRDSDMDSNPKTTSTEINQKGEAATEEPERPGAIVSNHVSYLDILYHMSASFPSFVAKRSVGKLPLVGLISKCLGCVYVQREAKSPDFKGVSGTVNERVREAHSNKSAPTIMLFPEGTTTNGDYLLTFKTGAFLAGTPVLPVILKYPYERFSVAWDTISGARHILFLLCQVVNHLEVIRLPVYYPSQEEKDDPKLYASNVRKLMATEGNLILSELGLSDKRIYHATLNGNLSQTRDFHQKEE.

Positions 1 to 24 (MESELKDLNSNSNPPSSKEDRPLL) are disordered. At Ser-28 the chain carries Phosphoserine. Residues 66–86 (LAVALVTLVPLRFLLSMSILL) traverse the membrane as a helical segment. Residues 158–185 (RDSDMDSNPKTTSTEINQKGEAATEEPE) are disordered. Residues 163 to 174 (DSNPKTTSTEIN) are compositionally biased toward polar residues. The HXXXXD motif motif lies at 194 to 199 (HVSYLD).

The protein belongs to the 1-acyl-sn-glycerol-3-phosphate acyltransferase family.

It is found in the endoplasmic reticulum membrane. The enzyme catalyses a 1-acyl-sn-glycero-3-phosphoethanolamine + an acyl-CoA = a 1,2-diacyl-sn-glycero-3-phosphoethanolamine + CoA. It carries out the reaction a 1-acyl-sn-glycero-3-phosphate + an acyl-CoA = a 1,2-diacyl-sn-glycero-3-phosphate + CoA. It catalyses the reaction a 1-acyl-sn-glycero-3-phosphocholine + an acyl-CoA = a 1,2-diacyl-sn-glycero-3-phosphocholine + CoA. The catalysed reaction is a 1-acyl-sn-glycero-3-phospho-L-serine + an acyl-CoA = a 1,2-diacyl-sn-glycero-3-phospho-L-serine + CoA. It participates in lipid metabolism; phospholipid metabolism. Possesses acyl-CoA-dependent lysophospholipid acyltransferase activity with a subset of lysophospholipids as substrates. Exhibits strong acylation activity on lysophosphatidylethanolamine (LPE) and lysophosphatidate (LPA), and lower activity on lysophosphatidylcholine (LPC) and lysophosphatidylserine (LPS). Exhibits acylation activity on both LPE and LPC. Has a preference for 18:1-LPE over 16:0-LPE as acceptor. Palmitoyl-CoA (16:0-CoA) is a better acyl donor than oleoyl-CoA (18:1-CoA). Among several different acyl-CoA species the best acyl donor is palmitoyl-CoA (16:0-CoA). Activity is calcium-independent. Its activity is essential for maintaining adequate levels of phosphatidylethanolamine (PE), LPE and LPC in the cells, which is crucial for plant growth regulation. This Arabidopsis thaliana (Mouse-ear cress) protein is Lysophospholipid acyltransferase LPEAT1.